A 148-amino-acid polypeptide reads, in one-letter code: SsrA-binding protein (148 aa).

Residues 119–148 (AKGKKQHDKRQSMKEADWKREKQRLIKHTR) are disordered. Over residues 127–142 (KRQSMKEADWKREKQR) the composition is skewed to basic and acidic residues.

This sequence belongs to the SmpB family.

It localises to the cytoplasm. Its function is as follows. Required for rescue of stalled ribosomes mediated by trans-translation. Binds to transfer-messenger RNA (tmRNA), required for stable association of tmRNA with ribosomes. tmRNA and SmpB together mimic tRNA shape, replacing the anticodon stem-loop with SmpB. tmRNA is encoded by the ssrA gene; the 2 termini fold to resemble tRNA(Ala) and it encodes a 'tag peptide', a short internal open reading frame. During trans-translation Ala-aminoacylated tmRNA acts like a tRNA, entering the A-site of stalled ribosomes, displacing the stalled mRNA. The ribosome then switches to translate the ORF on the tmRNA; the nascent peptide is terminated with the 'tag peptide' encoded by the tmRNA and targeted for degradation. The ribosome is freed to recommence translation, which seems to be the essential function of trans-translation. The polypeptide is SsrA-binding protein (Neisseria meningitidis serogroup C (strain 053442)).